The following is a 318-amino-acid chain: Transaldolase (318 aa).

The Schiff-base intermediate with substrate role is filled by Lys-132.

The protein belongs to the transaldolase family. Type 1 subfamily. In terms of assembly, homodimer.

It is found in the cytoplasm. It carries out the reaction D-sedoheptulose 7-phosphate + D-glyceraldehyde 3-phosphate = D-erythrose 4-phosphate + beta-D-fructose 6-phosphate. Its pathway is carbohydrate degradation; pentose phosphate pathway; D-glyceraldehyde 3-phosphate and beta-D-fructose 6-phosphate from D-ribose 5-phosphate and D-xylulose 5-phosphate (non-oxidative stage): step 2/3. Transaldolase is important for the balance of metabolites in the pentose-phosphate pathway. The polypeptide is Transaldolase (Shewanella putrefaciens (strain CN-32 / ATCC BAA-453)).